The chain runs to 29 residues: Galanin (29 aa).

A Threonine amide modification is found at threonine 29.

This sequence belongs to the galanin family.

Its subcellular location is the secreted. Contracts smooth muscle of the gastrointestinal and genitourinary tract, regulates growth hormone release, modulates insulin release, and may be involved in the control of adrenal secretion. The sequence is that of Galanin (GAL) from Gallus gallus (Chicken).